We begin with the raw amino-acid sequence, 139 residues long: Putative pre-16S rRNA nuclease (139 aa).

The protein belongs to the YqgF nuclease family.

The protein resides in the cytoplasm. Its function is as follows. Could be a nuclease involved in processing of the 5'-end of pre-16S rRNA. The chain is Putative pre-16S rRNA nuclease from Streptococcus agalactiae serotype Ia (strain ATCC 27591 / A909 / CDC SS700).